The following is a 475-amino-acid chain: UDP-glucosyltransferase UGT13248 (475 aa).

The segment covering 1-17 (METTVTAVSGTTSSSVG) has biased composition (low complexity). Positions 1 to 20 (METTVTAVSGTTSSSVGHGA) are disordered. UDP-alpha-D-glucose is bound by residues His38, Ser152, Thr299, Cys352, 369 to 377 (HCGWNSTLE), and 393 to 394 (DQ).

It belongs to the UDP-glycosyltransferase family.

In terms of biological role, involved in the detoxification of the Fusarium mycotoxin deoxynivalenol by the transfer of glucose from UDP-D-glucose to the hydroxyl group at C-3, forming deoxynivalenol-3-O-beta-D-glucoside. In Hordeum vulgare subsp. vulgare (Domesticated barley), this protein is UDP-glucosyltransferase UGT13248.